We begin with the raw amino-acid sequence, 177 residues long: Ribosome maturation factor RimM (177 aa).

The PRC barrel domain maps to 100–177 (EDEYYWSDLV…TVLVAWPSDY (78 aa)).

This sequence belongs to the RimM family. As to quaternary structure, binds ribosomal protein uS19.

The protein localises to the cytoplasm. Functionally, an accessory protein needed during the final step in the assembly of 30S ribosomal subunit, possibly for assembly of the head region. Essential for efficient processing of 16S rRNA. May be needed both before and after RbfA during the maturation of 16S rRNA. It has affinity for free ribosomal 30S subunits but not for 70S ribosomes. In Psychrobacter arcticus (strain DSM 17307 / VKM B-2377 / 273-4), this protein is Ribosome maturation factor RimM.